The primary structure comprises 526 residues: Outer capsid protein VP5 (526 aa).

The tract at residues 1 to 42 (MGKIIKSLSRFGKKVGNALTSNTAKKIYSTIGKAAERFAESE) is involved in membrane permeabilization.

It belongs to the orbivirus VP5 family.

Its subcellular location is the virion. Its function is as follows. VP5 protein is one of the two proteins (with VP2) which constitute the virus particle outer capsid. Acts as a membrane permeabilization protein that mediates release of viral particles from endosomal compartments into the cytoplasm. Permeabilization activity is probably negatively regulated by VP2 and is triggered by endosomal degradation of VP2 and exposure to low pH. The protein is Outer capsid protein VP5 (Segment-6) of Bluetongue virus 11 (isolate USA) (BTV 11).